The following is a 394-amino-acid chain: MSKEKFERTKPHVNVGTIGHVDHGKTTLTAAITTVLAKTYGGAARAFNQIDNAPEEKARGITINTSHVEYDTPTRHYAHVDCPGHADYVKNMITGAAQMDGAILVVAATDGPMPQTREHILLGRQVGVPYIIVFLNKCDMVDDEELLELVEMEVRELLSQYDFPGDDTPIVRGSALKALEGDAEWEAKILELAGFLDSYIPEPERAIDKPFLLPIEDVFSISGRGTVVTGRVERGIIKVGEEVEIVGIKETQKSTCTGVEMFRKLLDEGRAGENVGVLLRGIKREEIERGQVLAKPGTIKPHTKFESEVYILSKDEGGRHTPFFKGYRPQFYFRTTDVTGTIELPEGVEMVMPGDNIKMVVTLIHPIAMDDGLRFAIREGGRTVGAGVVAKVLS.

One can recognise a tr-type G domain in the interval 10-204 (KPHVNVGTIG…FLDSYIPEPE (195 aa)). The segment at 19–26 (GHVDHGKT) is G1. A GTP-binding site is contributed by 19–26 (GHVDHGKT). Residue Thr-26 participates in Mg(2+) binding. Residues 60-64 (GITIN) form a G2 region. Residues 81–84 (DCPG) are G3. GTP-binding positions include 81–85 (DCPGH) and 136–139 (NKCD). Positions 136–139 (NKCD) are G4. The segment at 174–176 (SAL) is G5.

The protein belongs to the TRAFAC class translation factor GTPase superfamily. Classic translation factor GTPase family. EF-Tu/EF-1A subfamily. As to quaternary structure, monomer.

The protein resides in the cytoplasm. The enzyme catalyses GTP + H2O = GDP + phosphate + H(+). GTP hydrolase that promotes the GTP-dependent binding of aminoacyl-tRNA to the A-site of ribosomes during protein biosynthesis. The chain is Elongation factor Tu 2 from Escherichia coli O139:H28 (strain E24377A / ETEC).